We begin with the raw amino-acid sequence, 501 residues long: E3 ubiquitin-protein ligase TRIM35 (501 aa).

The residue at position 1 (methionine 1) is an N-acetylmethionine. Serine 8 carries the post-translational modification Phosphoserine. Residues 21-61 form an RING-type zinc finger; it reads CAVCYDPFRDAVTLRCGHNFCRRCVSGCWEVQTTPSCPVCK. Residues 96–137 form a B box-type zinc finger; it reads RSPRPCRAHRAPLTLFCLEDKELLCCACQADARHQEHRVQPI. Zn(2+) contacts are provided by cysteine 101, histidine 104, cysteine 123, and histidine 129. The stretch at 200–252 forms a coiled coil; the sequence is VEEQATLDAMKEESRKKHLQAEEKMKQLAEQTEALAREIERLQMEMKEDDMTF. A B30.2/SPRY domain is found at 284-495; sequence LESLQYRVWK…LRICHLRVSI (212 aa).

The protein belongs to the TRIM/RBCC family. As to quaternary structure, interacts with PKM isoform M2, but not isoform M1; this interaction may compete with that between PKM and FGFR1, and hence reduces FGFR1-dependent tyrosine phosphorylation of PKM. Interacts with IRF7; this interaction promotes IRF7 proteasomal degradation. Interacts with TRAF3; this interaction promotes TRAF3 activation. Widely expressed. Highly expressed in brain, heart, kidney, spleen, skeletal muscle, lung and thymus. Lower expression found in stomach, large intestine and bone marrow.

Its subcellular location is the cytoplasm. The protein resides in the nucleus. It carries out the reaction S-ubiquitinyl-[E2 ubiquitin-conjugating enzyme]-L-cysteine + [acceptor protein]-L-lysine = [E2 ubiquitin-conjugating enzyme]-L-cysteine + N(6)-ubiquitinyl-[acceptor protein]-L-lysine.. It functions in the pathway protein modification; protein ubiquitination. In terms of biological role, E3 ubiquitin-protein ligase that participates in multiple biological processes including cell death, glucose metabolism, and in particular, the innate immune response. Mediates 'Lys-63'-linked polyubiquitination of TRAF3 thereby promoting type I interferon production via RIG-I signaling pathway. Can also catalyze 'Lys-48'-linked polyubiquitination and proteasomal degradation of viral proteins such as influenza virus PB2. Acts as a negative feedback regulator of TLR7- and TLR9-triggered signaling. Mechanistically, promotes the 'Lys-48'-linked ubiquitination of IRF7 and induces its degradation via a proteasome-dependent pathway. Reduces FGFR1-dependent tyrosine phosphorylation of PKM, inhibiting PKM-dependent lactate production, glucose metabolism, and cell growth. The chain is E3 ubiquitin-protein ligase TRIM35 (Trim35) from Mus musculus (Mouse).